Reading from the N-terminus, the 509-residue chain is Butyrophilin-like protein 1 (509 aa).

The N-terminal stretch at 1 to 27 (MMKGSPSVPPAGCLLPLLLLLFTGVSG) is a signal peptide. 2 Ig-like V-type domains span residues 28–139 (EVSW…QEVS) and 151–237 (PLVH…KAIL). Over 28-250 (EVSWFSVKGP…PFFPKTCPWK (223 aa)) the chain is Extracellular. 2 disulfide bridges follow: Cys53/Cys127 and Cys167/Cys221. Residues 251-271 (VALVCSVLILLVLLGGISLGI) traverse the membrane as a helical segment. Residues 272–509 (WKEHQVKRRE…SMGLSATAQP (238 aa)) are Cytoplasmic-facing. One can recognise a B30.2/SPRY domain in the interval 316–509 (RKALYKEDWK…SMGLSATAQP (194 aa)). Residues 349–372 (MPDQDKTDSRTEENRGEETVSSSQ) form a disordered region. Over residues 351-366 (DQDKTDSRTEENRGEE) the composition is skewed to basic and acidic residues.

It belongs to the immunoglobulin superfamily. BTN/MOG family.

It is found in the membrane. This Mus musculus (Mouse) protein is Butyrophilin-like protein 1 (Btnl1).